The chain runs to 459 residues: Probable ECA polymerase (459 aa).

Transmembrane regions (helical) follow at residues 3–23 (LTQF…ILTL), 37–57 (IFFS…TCLL), 65–85 (VVPV…YGIY), 119–139 (LASV…FLLF), 154–174 (GVAL…VYFL), 181–201 (WLFF…VVGG), 206–226 (IIIA…ITLW), 227–247 (MLVT…LKRY), 340–360 (LVVM…GLII), 377–397 (YKAA…IVLA), and 409–429 (VFFC…YWLF).

This sequence belongs to the WzyE family. As to quaternary structure, probably part of a complex composed of WzxE, WzyE and WzzE.

The protein localises to the cell inner membrane. The protein operates within bacterial outer membrane biogenesis; enterobacterial common antigen biosynthesis. In terms of biological role, probably involved in the polymerization of enterobacterial common antigen (ECA) trisaccharide repeat units. The polypeptide is Probable ECA polymerase (Photorhabdus laumondii subsp. laumondii (strain DSM 15139 / CIP 105565 / TT01) (Photorhabdus luminescens subsp. laumondii)).